A 308-amino-acid polypeptide reads, in one-letter code: Oligopeptide transport system permease protein AmiD (308 aa).

6 consecutive transmembrane segments (helical) span residues 43–63 (TVVM…YPMF), 111–131 (ILIS…VGGI), 145–167 (VYNV…SIGA), 171–193 (NLIF…VQIL), 234–254 (MLPS…GLPI), and 274–294 (AYLF…LFVV). One can recognise an ABC transmembrane type-1 domain in the interval 107–295 (ARNSILISVI…LVSLSLFVVG (189 aa)).

Belongs to the binding-protein-dependent transport system permease family. OppBC subfamily.

The protein resides in the cell membrane. In terms of biological role, part of the binding-protein-dependent transport system for oligopeptides; probably responsible for the translocation of the substrate across the membrane. The sequence is that of Oligopeptide transport system permease protein AmiD (amiD) from Streptococcus pneumoniae (strain ATCC BAA-255 / R6).